Here is a 750-residue protein sequence, read N- to C-terminus: MIIRSPEPEVKILVDRDPIKTSFEEWAKPGHFSRTIAKGPDTTTWIWNLHADAHDFDSHTNDLEEISRKVFSAHFGQLSIIFLWLSGMYFHGARFSNYEAWLSDPTHIRPSAQVVWPIVGQEILNGDVGGGFRGIQITSGFFQIWRASGITNELQLYCTAIGALVFAALMLFAGWFHYHKAAPKLAWFQDVESMLNHHLTGLLGLGSLSWAGHQIHVSLPINQFLNAAVDPKEIPLPHEFILNRDLLAQLYPSFAEGATPFFTLNWSKYGEFLTFRGGLDPVTGGLWLTDIIHHHLAIAILFLIAGHMYRTNWGIGHSIKDILEAHKGPFTGQGHKGLYEILTTSWHAQLSINLAMLGSLTIVVAHHMYSMPPYPYLATDYGTQLSLFTHHMWIGGFLIVGAAAHAAIFMVRDYDPTIRYNDLLDRVLRHRDAIISHLNWVCIFLGFHSFGLYIHNDTMSALGRPQDMFSDTAIQLQPIFAQWIQNTHALAPGTTAPGAATSTSLTWGGENLVAVGGKVALLPIPLGTADFLVHHIHAFTIHVTVLILLKGVLFARSSRLIPDKANLGFRFPCDGPGRGGTCQVSAWDHVFLGLFWMYNSISVVIFHFSWKMQSDVWGSISDQGIVTHITGGNFAQSSITINGWLRDFLWAQASQVIQSYGSSLSAYGLFFLGAHFVWAFSLMFLFSGRGYWQELIESIVWAHNKLKVAPATQPRALSIVQGRAVGVTHYLLGGIATTWAFFLARIIAVG.

Transmembrane regions (helical) follow at residues 70 to 93 (VFSAHFGQLSIIFLWLSGMYFHGA), 156 to 179 (LYCTAIGALVFAALMLFAGWFHYH), 195 to 219 (LNHHLTGLLGLGSLSWAGHQIHVSL), 291 to 309 (IIHHHLAIAILFLIAGHMY), 346 to 369 (WHAQLSINLAMLGSLTIVVAHHMY), 385 to 411 (LSLFTHHMWIGGFLIVGAAAHAAIFMV), 433 to 455 (AIISHLNWVCIFLGFHSFGLYIH), and 531 to 549 (FLVHHIHAFTIHVTVLILL). [4Fe-4S] cluster is bound by residues Cys-573 and Cys-582. 2 consecutive transmembrane segments (helical) span residues 589–610 (HVFLGLFWMYNSISVVIFHFSW) and 664–686 (LSAYGLFFLGAHFVWAFSLMFLF). Position 675 (His-675) interacts with chlorophyll a'. Residues Met-683 and Tyr-691 each contribute to the chlorophyll a site. Trp-692 contributes to the phylloquinone binding site. A helical membrane pass occupies residues 724-744 (AVGVTHYLLGGIATTWAFFLA).

This sequence belongs to the PsaA/PsaB family. In terms of assembly, the PsaA/B heterodimer binds the P700 chlorophyll special pair and subsequent electron acceptors. PSI consists of a core antenna complex that captures photons, and an electron transfer chain that converts photonic excitation into a charge separation. The eukaryotic PSI reaction center is composed of at least 11 subunits. P700 is a chlorophyll a/chlorophyll a' dimer, A0 is one or more chlorophyll a, A1 is one or both phylloquinones and FX is a shared 4Fe-4S iron-sulfur center. is required as a cofactor.

Its subcellular location is the plastid. It localises to the chloroplast thylakoid membrane. The enzyme catalyses reduced [plastocyanin] + hnu + oxidized [2Fe-2S]-[ferredoxin] = oxidized [plastocyanin] + reduced [2Fe-2S]-[ferredoxin]. In terms of biological role, psaA and PsaB bind P700, the primary electron donor of photosystem I (PSI), as well as the electron acceptors A0, A1 and FX. PSI is a plastocyanin-ferredoxin oxidoreductase, converting photonic excitation into a charge separation, which transfers an electron from the donor P700 chlorophyll pair to the spectroscopically characterized acceptors A0, A1, FX, FA and FB in turn. Oxidized P700 is reduced on the lumenal side of the thylakoid membrane by plastocyanin. The polypeptide is Photosystem I P700 chlorophyll a apoprotein A1 (Phaseolus vulgaris (Kidney bean)).